We begin with the raw amino-acid sequence, 287 residues long: Oxaloacetate decarboxylase (287 aa).

Serine 50 is a substrate binding site. Aspartate 88 contributes to the Mg(2+) binding site. Substrate is bound by residues arginine 159 and histidine 235.

The protein belongs to the isocitrate lyase/PEP mutase superfamily. Oxaloacetate decarboxylase family. As to quaternary structure, homotetramer; dimer of dimers. Mg(2+) serves as cofactor.

The enzyme catalyses oxaloacetate + H(+) = pyruvate + CO2. In terms of biological role, catalyzes the decarboxylation of oxaloacetate into pyruvate. Seems to play a role in maintaining cellular concentrations of bicarbonate and pyruvate. This chain is Oxaloacetate decarboxylase, found in Chromohalobacter salexigens (strain ATCC BAA-138 / DSM 3043 / CIP 106854 / NCIMB 13768 / 1H11).